The following is a 2544-amino-acid chain: DNA polymerase theta (2544 aa).

Basic residues predominate over residues 1 to 13 (MSLPRRSRKRRRS). Residues 1 to 57 (MSLPRRSRKRRRSSSGSDTFSGDGDSFVSPQLRCGPVLSPPPGLGRGRRLTGTGTNK) form a disordered region. Over residues 14–29 (SSGSDTFSGDGDSFVS) the composition is skewed to low complexity. Residues Q95 and 114 to 121 (APTSAGKT) each bind ATP. Positions 101 to 285 (LGHVLEGKNL…WLNAELYHTD (185 aa)) constitute a Helicase ATP-binding domain. Residues 101–551 (LGHVLEGKNL…STSQDMQTYA (451 aa)) are helicase activity. The DEAH box motif lies at 215-218 (DELH). Residues 320-551 (GDEDHIVSLC…STSQDMQTYA (232 aa)) enclose the Helicase C-terminal domain. The interaction with RAD51 stretch occupies residues 844-890 (DEEEEAAEERRSMRTIWVTGKGLSAREAAALIVEEAKMILQQDLIEM). Residues 896-955 (PKSPLSSSTHSRTSTSEVKEHTFKSQTKSSHKRLASMGRNSIRASGSNDKPSPDAERGID) are disordered. The span at 898–911 (SPLSSSTHSRTSTS) shows a compositional bias: low complexity. Polar residues predominate over residues 933-945 (GRNSIRASGSNDK). The span at 946–955 (PSPDAERGID) shows a compositional bias: basic and acidic residues. Residue K983 is modified to N6-acetyllysine. A compositionally biased stretch (polar residues) spans 1022–1034 (LSFSSEQVNNTLP). Disordered stretches follow at residues 1022-1058 (LSFS…GMHR) and 1128-1167 (VGHP…ESQL). The span at 1128 to 1139 (VGHPAAGSSPAA) shows a compositional bias: low complexity. Residues 1140-1155 (ARDRRGLAARETEKGN) are compositionally biased toward basic and acidic residues. At S1265 the chain carries Phosphoserine. 2 disordered regions span residues 1266–1288 (GVQG…SNPA) and 1331–1353 (QNKC…DHVD). A phosphoserine mark is found at S1438, S1442, S1444, and S1449. Residues 1478–1501 (FSNPPHPQEDPVMTPTVSEPQGTQ) are disordered. Residues 1492–1501 (PTVSEPQGTQ) are compositionally biased toward polar residues. Phosphoserine is present on residues S1511, S1519, S1585, and S1592. The tract at residues 1557-1591 (ECPQGKLVRGDQNEGSPKPKLTETNQDNSFTWSGA) is disordered. Residues 1578 to 1591 (TETNQDNSFTWSGA) show a composition bias toward polar residues. 2 stretches are compositionally biased toward basic and acidic residues: residues 1606 to 1616 (VSSPRENEKPK) and 1628 to 1638 (NSKESHEREEI). The disordered stretch occupies residues 1606–1697 (VSSPRENEKP…GLIPPTPVPA (92 aa)). Positions 1641–1652 (DLGTVQRTSVFP) are enriched in polar residues. Basic and acidic residues predominate over residues 1656 to 1667 (VKNRTEGLESKA). The residue at position 1710 (T1710) is a Phosphothreonine. The segment at 2052–2538 (AECESQKHVM…KVKIGASWGE (487 aa)) is DNA polymerase activity. Loop stretches follow at residues 2097-2132 (KLPP…GRQF) and 2212-2276 (EIKM…VPFP). Over residues 2104–2117 (MKTQGSKKTLGSTR) the composition is skewed to polar residues. Residues 2104 to 2124 (MKTQGSKKTLGSTRRGNESGR) are disordered. The active-site For DNA polymerase activity is D2284. Mg(2+) contacts are provided by D2284 and Y2285. The interval 2445–2489 (QLETFRSTFKSHGHRESMLQNDRTGLLPKRKLKGMFCPMRGGFFI) is loop 3. D2494 contributes to the Mg(2+) binding site.

This sequence belongs to the DNA polymerase type-A family. In terms of assembly, homomultimer; forms homodimers and homotetramers. Interacts with RAD51. Interacts with ORC2 and ORC4. Interacts with RHNO1; interaction takes place during mitosis and promotes POLQ recruitment to DNA damage sites. Interacts (when phosphorylated) with TOPBP1 (via BRCT domains 7 and 8); promoting POLQ recruitment to DNA damage sites. The cofactor is Mg(2+). In terms of processing, phosphorylated by PLK1; promoting interaction with TOPBP1 and recruitment to DNA damage sites.

The protein localises to the nucleus. Its subcellular location is the chromosome. The enzyme catalyses DNA(n) + a 2'-deoxyribonucleoside 5'-triphosphate = DNA(n+1) + diphosphate. It carries out the reaction ATP + H2O = ADP + phosphate + H(+). Low-fidelity DNA polymerase with a helicase activity that promotes microhomology-mediated end-joining (MMEJ), an alternative non-homologous end-joining (NHEJ) machinery required to repair double-strand breaks in DNA during mitosis. MMEJ is an error-prone repair pathway that produces deletions of sequences from the strand being repaired and promotes genomic rearrangements, such as telomere fusions, some of them leading to cellular transformation. MMEJ is required during mitosis to repair persistent double-strand breaks that originate in S-phase. Although error-prone, MMEJ protects against chromosomal instability and tumorigenesis. The polymerase acts by binding directly the 2 ends of resected double-strand breaks, allowing microhomologous sequences in the overhangs to form base pairs. It then extends each strand from the base-paired region using the opposing overhang as a template. Requires partially resected DNA containing 2 to 6 base pairs of microhomology to perform MMEJ. The polymerase lacks proofreading activity and is highly promiscuous: unlike most polymerases, promotes extension of ssDNA and partial ssDNA (pssDNA) substrates. When the ends of a break do not contain terminal microhomology must identify embedded complementary sequences through a scanning step. Also acts as a DNA helicase, promoting dissociation of the replication protein A complex (RPA/RP-A), composed of RPA1, RPA2 and RPA3, from resected double-strand breaks to allow their annealing and subsequent joining by MMEJ. Removal of RPA/RP-A complex proteins prevents RAD51 accumulation at resected ends, thereby inhibiting homology-recombination repair (HR) pathway. Also shows RNA-directed DNA polymerase activity to mediate DNA repair in vitro; however this activity needs additional evidence in vivo. May also have lyase activity. Involved in somatic hypermutation of immunoglobulin genes, a process that requires the activity of DNA polymerases to ultimately introduce mutations at both A/T and C/G base pairs. However, POLQ does not play a major role in somatic hypermutation. POLQ-mediated end joining activity is involved in random integration of exogenous DNA hampers. This chain is DNA polymerase theta, found in Mus musculus (Mouse).